Here is a 255-residue protein sequence, read N- to C-terminus: Vitamin B12 import ATP-binding protein BtuD (255 aa).

The ABC transporter domain occupies 2 to 240 (MHVKHIALGS…EGLAEVFQTQ (239 aa)). 30–37 (GPNGSGKS) is an ATP binding site.

The protein belongs to the ABC transporter superfamily. Vitamin B12 importer (TC 3.A.1.13.1) family. In terms of assembly, the complex is composed of two ATP-binding proteins (BtuD), two transmembrane proteins (BtuC) and a solute-binding protein (BtuF).

It localises to the cell inner membrane. The catalysed reaction is an R-cob(III)alamin(out) + ATP + H2O = an R-cob(III)alamin(in) + ADP + phosphate + H(+). Its function is as follows. Part of the ABC transporter complex BtuCDF involved in vitamin B12 import. Responsible for energy coupling to the transport system. The protein is Vitamin B12 import ATP-binding protein BtuD of Vibrio campbellii (strain ATCC BAA-1116).